The primary structure comprises 367 residues: MDDKKNAPSSDKSKALAAALAQIEKQFGKGSVMRMEDGAVVEEVQVVSTGSLGLDLALGVGGLPRGRVVEIYGPESSGKTTLTLQTIAEMQKLGGTCAFIDAEHALDVTYAQKLGINLSELLISQPDTGEQALEICDALVRSGGVDLIVIDSVAALTPRAEIEGDMGDSLPGLQARLMSQALRKLTGSINRTNTLVIFINQIRMKIGVMFGNPETTTGGNALKFYASVRLDIRRTGSIKSGDEVIGNETKVKVVKNKIAPPFKEAHFEILYGEGTSREGEILDLGSDAKIVEKSGAWYSYNGERIGQGKDNARNYLKERPELAREIENKVRASLGVPELGAIKSDEPVAKKASAKESKEAKELKEVE.

73–80 (GPESSGKT) contacts ATP. The segment at 345 to 367 (DEPVAKKASAKESKEAKELKEVE) is disordered.

Belongs to the RecA family.

The protein resides in the cytoplasm. In terms of biological role, can catalyze the hydrolysis of ATP in the presence of single-stranded DNA, the ATP-dependent uptake of single-stranded DNA by duplex DNA, and the ATP-dependent hybridization of homologous single-stranded DNAs. It interacts with LexA causing its activation and leading to its autocatalytic cleavage. This is Protein RecA from Herminiimonas arsenicoxydans.